The primary structure comprises 67 residues: Photosystem II reaction center protein H (67 aa).

The chain crosses the membrane as a helical span at residues 27-47 (GAVPVMAFVGVLLLVFLVILL).

This sequence belongs to the PsbH family. As to quaternary structure, PSII is composed of 1 copy each of membrane proteins PsbA, PsbB, PsbC, PsbD, PsbE, PsbF, PsbH, PsbI, PsbJ, PsbK, PsbL, PsbM, PsbT, PsbX, PsbY, Psb30/Ycf12, peripheral proteins PsbO, CyanoQ (PsbQ), PsbU, PsbV and a large number of cofactors. It forms dimeric complexes.

It is found in the cellular thylakoid membrane. One of the components of the core complex of photosystem II (PSII), required for its stability and/or assembly. PSII is a light-driven water:plastoquinone oxidoreductase that uses light energy to abstract electrons from H(2)O, generating O(2) and a proton gradient subsequently used for ATP formation. It consists of a core antenna complex that captures photons, and an electron transfer chain that converts photonic excitation into a charge separation. This Prochlorococcus marinus (strain SARG / CCMP1375 / SS120) protein is Photosystem II reaction center protein H.